A 330-amino-acid chain; its full sequence is Malate dehydrogenase (330 aa).

13-19 (GAAGQIG) contributes to the NAD(+) binding site. Arg-94 and Arg-100 together coordinate substrate. Residues Asn-107, Gln-114, and 131–133 (VGN) contribute to the NAD(+) site. Positions 133 and 164 each coordinate substrate. The Proton acceptor role is filled by His-189.

Belongs to the LDH/MDH superfamily. MDH type 2 family.

It catalyses the reaction (S)-malate + NAD(+) = oxaloacetate + NADH + H(+). In terms of biological role, catalyzes the reversible oxidation of malate to oxaloacetate. The polypeptide is Malate dehydrogenase (Deinococcus radiodurans (strain ATCC 13939 / DSM 20539 / JCM 16871 / CCUG 27074 / LMG 4051 / NBRC 15346 / NCIMB 9279 / VKM B-1422 / R1)).